We begin with the raw amino-acid sequence, 1722 residues long: Leucine-rich repeat- and IQ domain-containing protein 1 (1722 aa).

Disordered stretches follow at residues 23–47, 182–202, 265–285, and 319–367; these read SLEK…TDSV, EDKE…QFQE, RTRF…QQNN, and QEWK…YEEK. Residues 38–47 are compositionally biased toward acidic residues; that stretch reads QSDDSDTDSV. Residues 265 to 278 show a composition bias toward basic and acidic residues; sequence RTRFKDQQEKEKNS. In terms of domain architecture, IQ 1 spans 283–312; the sequence is QNNAAVKIQAKYKAFVAYQKYGPIIKEQIE. LRR repeat units follow at residues 819–840, 841–861, 862–883, 884–905, 970–991, 992–1013, 1014–1035, 1036–1057, 1060–1081, and 1082–1103; these read NLQF…SNCK, KLKY…ENLE, NLCV…DGCT, NIQC…FFLE, NLQQ…CDTP, TIVY…ENCG, LLQI…ENLV, LLRE…SSYW, LLQN…FHFV, and SLEK…IKWF. Positions 1117–1157 constitute an LRRCT domain; the sequence is NPLLQETNWRDSLLKVLPALRILNGNILNSNSESRTEEHNQ. IQ domains lie at 1335 to 1364 and 1395 to 1424; these read KIMA…LHTA and REKA…AIKN. A compositionally biased stretch (polar residues) spans 1506–1524; sequence SEHTQFNSRSENKTSSWTP. The disordered stretch occupies residues 1506–1534; it reads SEHTQFNSRSENKTSSWTPESKTSRKSLL.

This chain is Leucine-rich repeat- and IQ domain-containing protein 1 (LRRIQ1), found in Homo sapiens (Human).